Consider the following 168-residue polypeptide: MKFQHTFIALLSLLTYANAYDYFTTTLANQNPVCASVDVIQNVCTEVCGRFVRYIPDATNTNQFTFAEYTTNQCTVQVTPAVTNTFTCADQTSSHALGSDWSGVCKITATPAPTVTPTVTPTVTPTVTPTPTNTPNPTPSQTSTTTGSASTVVASLSLIIFSMILSLC.

The signal sequence occupies residues 1–19; it reads MKFQHTFIALLSLLTYANA. 13 O-linked (GlcNAc) threonine glycosylation sites follow: threonine 110, threonine 114, threonine 116, threonine 118, threonine 120, threonine 122, threonine 124, threonine 126, threonine 128, threonine 130, threonine 132, threonine 134, and threonine 138. 3 repeat units span residues 116–119, 120–123, and 124–127. The 3 X 4 AA tandem repeats of T-P-T-V stretch occupies residues 116 to 127; that stretch reads TPTVTPTVTPTV. A compositionally biased stretch (low complexity) spans 116–131; it reads TPTVTPTVTPTVTPTP. Positions 116 to 147 are disordered; the sequence is TPTVTPTVTPTVTPTPTNTPNPTPSQTSTTTG. A glycan (O-linked (GlcNAc) serine) is linked at serine 140. A lipid anchor (GPI-like-anchor amidated glycine) is attached at glycine 147. Residues 148 to 168 constitute a propeptide, removed in mature form; the sequence is SASTVVASLSLIIFSMILSLC.

The protein belongs to the ponticulin family. In terms of processing, O-glycosylated in the repeat region. The oligosaccharides contain N-acetylglucosamine and fucose as the major constituents. The GPI-like-anchor contains a phosphoceramide group, rather than a phosphatidyl group.

It localises to the cell membrane. In terms of biological role, may bind F-actin and nucleates actin assembly. This Dictyostelium discoideum (Social amoeba) protein is Prespore-specific protein A (pspA).